The sequence spans 120 residues: NAD(P)H-quinone oxidoreductase subunit 3, chloroplastic (120 aa).

3 helical membrane passes run 10–30, 64–84, and 88–108; these read FWAF…ISGV, MFAL…PWAM, and VLGV…IGGL.

Belongs to the complex I subunit 3 family. NDH is composed of at least 16 different subunits, 5 of which are encoded in the nucleus.

It is found in the plastid. The protein resides in the chloroplast thylakoid membrane. The enzyme catalyses a plastoquinone + NADH + (n+1) H(+)(in) = a plastoquinol + NAD(+) + n H(+)(out). The catalysed reaction is a plastoquinone + NADPH + (n+1) H(+)(in) = a plastoquinol + NADP(+) + n H(+)(out). In terms of biological role, NDH shuttles electrons from NAD(P)H:plastoquinone, via FMN and iron-sulfur (Fe-S) centers, to quinones in the photosynthetic chain and possibly in a chloroplast respiratory chain. The immediate electron acceptor for the enzyme in this species is believed to be plastoquinone. Couples the redox reaction to proton translocation, and thus conserves the redox energy in a proton gradient. In Ipomoea purpurea (Common morning glory), this protein is NAD(P)H-quinone oxidoreductase subunit 3, chloroplastic.